A 164-amino-acid polypeptide reads, in one-letter code: Protein SprT (164 aa).

The region spanning 14 to 156 (QLAESFFKRP…LCRRCRNTLV (143 aa)) is the SprT-like domain. Histidine 69 is a binding site for Zn(2+). Glutamate 70 is an active-site residue. Histidine 73 serves as a coordination point for Zn(2+).

It belongs to the SprT family. It depends on Zn(2+) as a cofactor.

The protein resides in the cytoplasm. The sequence is that of Protein SprT from Pseudomonas fluorescens (strain Pf0-1).